We begin with the raw amino-acid sequence, 200 residues long: NADH-quinone oxidoreductase subunit B (200 aa).

Residues Cys78, Cys79, Cys144, and Cys174 each contribute to the [4Fe-4S] cluster site.

It belongs to the complex I 20 kDa subunit family. In terms of assembly, NDH-1 is composed of 14 different subunits. Subunits NuoB, C, D, E, F, and G constitute the peripheral sector of the complex. [4Fe-4S] cluster is required as a cofactor.

Its subcellular location is the cell membrane. It carries out the reaction a quinone + NADH + 5 H(+)(in) = a quinol + NAD(+) + 4 H(+)(out). Its function is as follows. NDH-1 shuttles electrons from NADH, via FMN and iron-sulfur (Fe-S) centers, to quinones in the respiratory chain. The immediate electron acceptor for the enzyme in this species is believed to be ubiquinone. Couples the redox reaction to proton translocation (for every two electrons transferred, four hydrogen ions are translocated across the cytoplasmic membrane), and thus conserves the redox energy in a proton gradient. This is NADH-quinone oxidoreductase subunit B from Dehalococcoides mccartyi (strain CBDB1).